A 292-amino-acid chain; its full sequence is Zinc metalloproteinase nas-3 (292 aa).

The first 16 residues, 1–16, serve as a signal peptide directing secretion; that stretch reads MYRFIIFFSLLALTAS. A Peptidase M12A domain is found at 56-249; that stretch reads RGIAIHPWQW…RNINTLYKCN (194 aa). Disulfide bonds link C103/C248 and C128/C158. H169 contacts Zn(2+). The active site involves E170. Zn(2+) is bound by residues H173 and H179.

Zn(2+) is required as a cofactor.

It is found in the secreted. Its function is as follows. Metalloprotease. This is Zinc metalloproteinase nas-3 (nas-3) from Caenorhabditis elegans.